We begin with the raw amino-acid sequence, 422 residues long: Tyrosine--tRNA ligase 1 (422 aa).

L-tyrosine is bound at residue Y35. The 'HIGH' region signature appears at 40-49 (PTADSLHIGH). 2 residues coordinate L-tyrosine: Y170 and Q174. Residues 232–236 (KFGKT) carry the 'KMSKS' region motif. Residue K235 coordinates ATP. In terms of domain architecture, S4 RNA-binding spans 355–421 (LSLVDVLVQS…GKKKYFLVTY (67 aa)).

This sequence belongs to the class-I aminoacyl-tRNA synthetase family. TyrS type 1 subfamily. Homodimer.

It is found in the cytoplasm. The catalysed reaction is tRNA(Tyr) + L-tyrosine + ATP = L-tyrosyl-tRNA(Tyr) + AMP + diphosphate + H(+). Catalyzes the attachment of tyrosine to tRNA(Tyr) in a two-step reaction: tyrosine is first activated by ATP to form Tyr-AMP and then transferred to the acceptor end of tRNA(Tyr). This chain is Tyrosine--tRNA ligase 1, found in Bacillus subtilis (strain 168).